A 289-amino-acid polypeptide reads, in one-letter code: Arabinogalactan O-methyltransferase 1 (289 aa).

A helical transmembrane segment spans residues 12 to 32; that stretch reads IITGVLLAGLVGGALLFTSFI.

This sequence belongs to the methyltransferase superfamily. In terms of assembly, binds to the translation initiation factors TIF3E1.

It localises to the golgi apparatus membrane. Involved in the methylation of glucuronic acid of different plant cell wall component, but mainly on side chains of arabinogalactans. The sequence is that of Arabinogalactan O-methyltransferase 1 (AGM1) from Arabidopsis thaliana (Mouse-ear cress).